Reading from the N-terminus, the 118-residue chain is Large ribosomal subunit protein bL20 (118 aa).

It belongs to the bacterial ribosomal protein bL20 family.

Binds directly to 23S ribosomal RNA and is necessary for the in vitro assembly process of the 50S ribosomal subunit. It is not involved in the protein synthesizing functions of that subunit. The sequence is that of Large ribosomal subunit protein bL20 from Synechococcus sp. (strain JA-2-3B'a(2-13)) (Cyanobacteria bacterium Yellowstone B-Prime).